Reading from the N-terminus, the 377-residue chain is Succinyl-diaminopimelate desuccinylase (377 aa).

A Zn(2+)-binding site is contributed by His66. Asp68 is a catalytic residue. Zn(2+) is bound at residue Asp99. Glu133 acts as the Proton acceptor in catalysis. 3 residues coordinate Zn(2+): Glu134, Glu163, and His349.

This sequence belongs to the peptidase M20A family. DapE subfamily. In terms of assembly, homodimer. Requires Zn(2+) as cofactor. Co(2+) is required as a cofactor.

It carries out the reaction N-succinyl-(2S,6S)-2,6-diaminopimelate + H2O = (2S,6S)-2,6-diaminopimelate + succinate. It participates in amino-acid biosynthesis; L-lysine biosynthesis via DAP pathway; LL-2,6-diaminopimelate from (S)-tetrahydrodipicolinate (succinylase route): step 3/3. Its function is as follows. Catalyzes the hydrolysis of N-succinyl-L,L-diaminopimelic acid (SDAP), forming succinate and LL-2,6-diaminopimelate (DAP), an intermediate involved in the bacterial biosynthesis of lysine and meso-diaminopimelic acid, an essential component of bacterial cell walls. In Legionella pneumophila (strain Corby), this protein is Succinyl-diaminopimelate desuccinylase.